A 600-amino-acid polypeptide reads, in one-letter code: Xylulose kinase (600 aa).

79-82 (WLEA) lines the substrate pocket. Phosphoserine is present on Ser-244. Asp-299 provides a ligand contact to substrate. Residues Gly-358 and 505–509 (GASKN) each bind ATP.

The protein belongs to the FGGY kinase family.

The protein localises to the cytoplasm. It catalyses the reaction D-xylulose + ATP = D-xylulose 5-phosphate + ADP + H(+). Its function is as follows. Xylulose kinase necessary for growth in culture media with D-xylulose as the solecarbon source. This is Xylulose kinase from Saccharomyces cerevisiae (strain ATCC 204508 / S288c) (Baker's yeast).